A 271-amino-acid polypeptide reads, in one-letter code: Keratin-associated protein 10-5 (271 aa).

A run of 22 repeats spans residues 26-30 (CCEPP), 51-55 (CCQAA), 73-77 (CCQPA), 78-82 (CCASS), 88-92 (CCVPV), 93-97 (CCKPV), 98-102 (CCLPT), 110-114 (CCQQS), 120-124 (CCASS), 130-134 (CCVPV), 135-139 (CCKPV), 140-144 (CCVPT), 152-156 (CCQHS), 162-166 (CCTSS), 177-181 (CCKPV), 187-191 (CCVPV), 199-203 (CCQQS), 209-213 (CCTTS), 214-218 (CCRPS), 233-237 (CCLPI), 240-244 (CCAPA), and 251-255 (CCRPA). The tract at residues 26–255 (CCEPPCGTAP…SYQASCCRPA (230 aa)) is 22 X 5 AA repeats of C-C-X(3).

It belongs to the KRTAP type 10 family. Interacts with hair keratins. In terms of tissue distribution, restricted to a narrow region of the hair fiber cuticle, lying approximately 20 cell layers above the apex of the dermal papilla of the hair root; not detected in any other tissues.

Its function is as follows. In the hair cortex, hair keratin intermediate filaments are embedded in an interfilamentous matrix, consisting of hair keratin-associated proteins (KRTAP), which are essential for the formation of a rigid and resistant hair shaft through their extensive disulfide bond cross-linking with abundant cysteine residues of hair keratins. The matrix proteins include the high-sulfur and high-glycine-tyrosine keratins. This chain is Keratin-associated protein 10-5 (KRTAP10-5), found in Homo sapiens (Human).